The primary structure comprises 119 residues: Protein TusC (119 aa).

The protein belongs to the DsrF/TusC family. As to quaternary structure, heterohexamer, formed by a dimer of trimers. The hexameric TusBCD complex contains 2 copies each of TusB, TusC and TusD. The TusBCD complex interacts with TusE.

The protein localises to the cytoplasm. Part of a sulfur-relay system required for 2-thiolation of 5-methylaminomethyl-2-thiouridine (mnm(5)s(2)U) at tRNA wobble positions. This Shigella flexneri serotype 5b (strain 8401) protein is Protein TusC.